A 187-amino-acid chain; its full sequence is Peptide deformylase (187 aa).

Fe cation-binding residues include Cys114 and His157. Residue Glu158 is part of the active site. Residue His161 participates in Fe cation binding.

Belongs to the polypeptide deformylase family. Requires Fe(2+) as cofactor.

The enzyme catalyses N-terminal N-formyl-L-methionyl-[peptide] + H2O = N-terminal L-methionyl-[peptide] + formate. In terms of biological role, removes the formyl group from the N-terminal Met of newly synthesized proteins. Requires at least a dipeptide for an efficient rate of reaction. N-terminal L-methionine is a prerequisite for activity but the enzyme has broad specificity at other positions. The polypeptide is Peptide deformylase (Enterococcus faecalis (strain ATCC 700802 / V583)).